The primary structure comprises 1341 residues: MGRPRKNVSQEKIQQLKRELELAGNRTDVLLQDKKGRSRSCLLCRRRKQRCDHKLPSCTACLKAGIKCVQPSKYSSSTSNSNTNNNTPTAGTVPPTPHPVIKRELQDSSIGAGAGAATSLNDMTIIKPISTSNSNVDAGDANEFRKTIKSVTTNSNPNLMRQDKDQYTIFLEKKLKSLETLLDLSPGCNQYNYELSQYKKVSHLFSNNTSDYSRPNSSNMVILPLPSPSNKPLENTNNNGSNVNAATNDTSASTNNINNNNAICQSASLLNDPLETLDFTKCIFAKYNLKKEFLMYDPIFELNEKLSRSFLDTFFTRLQFKYPILDEQEIYTFYDHYLHNKILIPPSSPATSSAAPPSNSHSYSEIEFHFLSGRMWLVFSISAYLLMTTGKYKGFPPHRYFSTAIRHITKCGLHLNYVQQIELLTLLVLYIIRTDRDSLILYDIIKDVMGISKKKLHLNQWYPNDPFANKKLRLFWCVYLLERMICVAVGKPYTIKESEINLPLFNNDSFYTKGVHAAAPSTNDHGVQFINQSLKLRRIESQFVETLQLLKNDSRSVKQSIDQLPLVRKFFEDLEVWRKSYSTLDVKNFENETLKLYYYRSVRLLIQPYLEFFAPEDRLFRECQAAAGQICQLYKIFHQKTLNGHSTPAVHTVFVAGVTLIYCMWLARNFDDQRRKKLGDASKHTRPLISASLFSTMDDLRACSVCLYVMTERSNFARTFRDTFDQLMNATVGNLIERCGPDSSELIFMASSVAKRTEPKNINDEANKAISSGDTLHDSNSANAANLSNSNDKNISHNGGMPPAVARIFGKGQAEEHAGFVENSQVDLAEQEKFKKKQGVLEKTSVPKSLAHLLTKMDDRSRISNSSMSYTTSSSSSSSSSSSSSTLSFPSSQEKNLKINVNNDNNGMTISSVNREHNNNHNNNNDNNNNNNNNNNNSNNNNNVNNNDNESNSRSTTNNSCNNGNNSQYVRNNNVTMENDVERPIQDQYIVKKPTNQTEFDWQVFQQQAFLQQQLAQHNLQAYLSSLNTDTMTNRSPSKSSSISTASSHSDPIPIAMTQSPTPYPQTSNMLPQQHVSRPLPQQQREQPQQHITSPQRFSESNFTNQLNNGMINSNPLQSAIFSNHTSENKQLRDVEESNFSTSPLRADYGNNIISSIPASFTSNSIPVSVKQARNGSSSGDILFSNGAHDMINNISTWTNNSVLDALNSKSILQTIFPQSQEPSSLSMDKQQQQHQQQNMCSENNVTANNFQQTQNDPSYNRNLFMMSNQEGVQYNLDETEKNGPKTQVEANTSANLHFDNVIPTVTNADIRKKRSNWDNMMTSGPVEDFWTINDDYGFLT.

A DNA-binding region (zn(2)-C6 fungal-type) is located at residues 41 to 68 (CLLCRRRKQRCDHKLPSCTACLKAGIKC). Composition is skewed to low complexity over residues 72-93 (SKYS…AGTV), 779-791 (SNSA…SNSN), 864-906 (SNSS…NDNN), 920-967 (NHNN…GNNS), and 1036-1050 (SPSK…SSHS). Disordered regions lie at residues 72–100 (SKYS…PHPV), 770–804 (ISSG…MPPA), 864–971 (SNSS…QYVR), and 1031–1116 (TMTN…NSNP). The span at 1057–1076 (MTQSPTPYPQTSNMLPQQHV) shows a compositional bias: polar residues. Low complexity predominate over residues 1078-1090 (RPLPQQQREQPQQ). Residues 1091–1116 (HITSPQRFSESNFTNQLNNGMINSNP) show a composition bias toward polar residues. A Phosphoserine modification is found at Ser-1143. Residues 1220–1230 (SQEPSSLSMDK) are compositionally biased toward polar residues. Residues 1220-1240 (SQEPSSLSMDKQQQQHQQQNM) form a disordered region.

It is found in the nucleus. This is an uncharacterized protein from Saccharomyces cerevisiae (strain ATCC 204508 / S288c) (Baker's yeast).